We begin with the raw amino-acid sequence, 596 residues long: Mitoguardin 2 (596 aa).

2 helical membrane-spanning segments follow: residues 11–31 (IMQA…STFG) and 40–60 (LSPS…ALAL). Disordered regions lie at residues 67–158 (RRGR…AAWE) and 576–596 (ALPK…GQQD). Positions 110–123 (MSPSTRSNDTLSGV) are enriched in polar residues. Residues 124–140 (SSIAQSKHSSSSHSIAS) are compositionally biased toward low complexity. Composition is skewed to polar residues over residues 143-152 (VPSSPNQSVN) and 583-596 (QAES…GQQD).

It belongs to the mitoguardin family. As to quaternary structure, homodimer and heterodimer; forms heterodimers with miga1.

The protein resides in the mitochondrion outer membrane. In terms of biological role, regulator of mitochondrial fusion: acts by forming homo- and heterodimers at the mitochondrial outer membrane and facilitating the formation of pld6/MitoPLD dimers. May act by regulating phospholipid metabolism via pld6/MitoPLD. The polypeptide is Mitoguardin 2 (Danio rerio (Zebrafish)).